Reading from the N-terminus, the 1202-residue chain is Voltage-gated inwardly rectifying potassium channel KCNH6 (1202 aa).

Topologically, residues 1-405 are cytoplasmic; the sequence is MGSAALPHAR…YSPFKAVWDW (405 aa). The 49-residue stretch at 36-84 folds into the PAS domain; that stretch reads IIYCNDGFCEMFGYSRVEVMQRPCTCDFLTGPDTTKSSIAQLTQALLGS. The PAC domain maps to 87 to 139; it reads CKLEILYYRKDTSCFRCLVDVVPVKNEDGVVIMFILNFEDLAQLIAKSSGRSL. 2 disordered regions span residues 203 to 243 and 285 to 315; these read ENCV…LGPR and ERRANSEGGMGLSGKASHVKPNPPNSTSDSD. A compositionally biased stretch (basic and acidic residues) spans 213-222; sequence LLEKERRPSL. The helical transmembrane segment at 406–426 threads the bilayer; sequence LILLLVIYTAVFTPYSAAFLL. Topologically, residues 427 to 443 are extracellular; the sequence is NEEQGEEKHWNCSYSCD. Asparagine 437 carries N-linked (GlcNAc...) asparagine glycosylation. A helical membrane pass occupies residues 444 to 464; the sequence is PLNIIDLIVDIMFIVDIVINF. At 465–485 the chain is on the cytoplasmic side; sequence RTTYVNINDEVVSHPGKIAIH. The helical transmembrane segment at 486–506 threads the bilayer; sequence YFKGWFLIDMVAAIPFDLLIF. Residues 507 to 515 are Extracellular-facing; the sequence is RSGSDETTT. Residues 516 to 536 traverse the membrane as a helical; Voltage-sensor segment; it reads LIGLLKTARLLRLVRVARKLD. Topologically, residues 537–543 are cytoplasmic; that stretch reads RYSEYGA. Residues 544–564 form a helical membrane-spanning segment; sequence AVLFLLMCTFALIAHWLACIW. Residues 565-608 lie on the Extracellular side of the membrane; the sequence is YAIGNVERPYMEHKIGWLDNLGDQIGKRYNDSDLSSGPSIKDKY. N-linked (GlcNAc...) asparagine glycosylation occurs at asparagine 594. Positions 609-629 form an intramembrane region, pore-forming; sequence VTALYFTFSSLTSVGFGNVSP. Positions 621 to 626 match the Selectivity filter motif; the sequence is SVGFGN. Over 630–635 the chain is Extracellular; that stretch reads NTNSEK. Residues 636-656 form a helical membrane-spanning segment; it reads IFSICVMLIGSLMYASIFGNV. Residues 657-1202 lie on the Cytoplasmic side of the membrane; that stretch reads SAIIQRLYSG…HLSDPVLPGS (546 aa). Residues 739–839 form a cNMP-binding domain region; it reads AFRGASKGCL…IQREDLLEVL (101 aa). 3 disordered regions span residues 912–948, 1092–1112, and 1140–1202; these read LTNPQDPLSKDQWDDVGSSTTPCSQTSDDEAKPGSPT, TPCAPLEDEQQTAPGQSPSYA, and TVYS…LPGS. Residues 928 to 937 show a composition bias toward polar residues; the sequence is GSSTTPCSQT. Residues 1179–1195 are compositionally biased toward basic and acidic residues; sequence EHLEASSEHQDIQRHLS.

Belongs to the potassium channel family. H (Eag) (TC 1.A.1.20) subfamily. Kv11.2/KCNH6 sub-subfamily. In terms of assembly, the potassium channel is probably composed of a homo- or heterotetrameric complex of pore-forming alpha subunits that can associate only within their subfamily.

It localises to the cell membrane. It catalyses the reaction K(+)(in) = K(+)(out). Its function is as follows. Pore-forming (alpha) subunit of voltage-gated inwardly rectifying potassium channel. Characterized by unusual gating kinetics by producing relatively small outward currents during membrane depolarization and large inward currents during subsequent repolarization which reflect a rapid inactivation during depolarization and quick recovery from inactivation but slow deactivation (closing) during repolarization. Activates even more slowly than KCNH2. This is Voltage-gated inwardly rectifying potassium channel KCNH6 from Gallus gallus (Chicken).